The chain runs to 832 residues: Serine/threonine-protein kinase Doa (832 aa).

4 disordered regions span residues 1-86 (MVAA…SKYI), 135-158 (LLQHQQQQHHQQQQQQHQEQQQYP), 179-215 (SDPFMQQQHMPAHQQQQHLPHKLQQSYSSSHVPKQAP), and 258-419 (SKIG…QLQQ). Positions 8–18 (VPTSSSSSAAT) are enriched in polar residues. Residues 20-32 (RQKDVDNKLEKCL) show a composition bias toward basic and acidic residues. Low complexity-rich tracts occupy residues 40-53 (TSSNNNSTSNSNNN), 137-158 (QHQQQQHHQQQQQQHQEQQQYP), and 183-203 (MQQQHMPAHQQQQHLPHKLQQ). Residues 271-282 (HSASFSSAQRPT) are compositionally biased toward polar residues. Composition is skewed to low complexity over residues 285–310 (QFHQQHQQQQHLQQQQQHPQQQQHQH), 347–365 (QMQPVKYQQQQQHPHTQFQ), and 396–419 (SSSSNKQPQQPQQQQQQQQSQLQQ). One can recognise a Protein kinase domain in the interval 479-799 (YKIMATLGEG…LGEALHHPFF (321 aa)). ATP is bound by residues 485–493 (LGEGTFGRV) and Lys-508. The active-site Proton acceptor is Asp-605. Residues 809–832 (GEVSNKQPLSSGSSSRERSHSLSR) are disordered. Over residues 823–832 (SRERSHSLSR) the composition is skewed to basic and acidic residues.

The protein belongs to the protein kinase superfamily. CMGC Ser/Thr protein kinase family. Lammer subfamily. In terms of assembly, interacts (via N-terminus) with x16 (via Arg/Ser-rich region). Interacts with eEF1gamma (via C-terminus); the interaction is probably direct, is transient and leads to phosphorylation of eEF1gamma by Doa. Requires Mg(2+) as cofactor. In terms of processing, autophosphorylated on serine, threonine and tyrosine residues. As to expression, ubiquitous expression in embryos. Stage 17 embryos show elevated expression in CNS and brain. Ubiquitous expression in larval imaginal disks. Increased expression posterior to the eye-antennal disk morphogenetic furrow.

Its subcellular location is the cytoplasm. It is found in the cytosol. The protein localises to the nucleus. The catalysed reaction is L-seryl-[protein] + ATP = O-phospho-L-seryl-[protein] + ADP + H(+). The enzyme catalyses L-threonyl-[protein] + ATP = O-phospho-L-threonyl-[protein] + ADP + H(+). It catalyses the reaction L-tyrosyl-[protein] + ATP = O-phospho-L-tyrosyl-[protein] + ADP + H(+). In terms of biological role, dual specificity kinase involved in the negative regulation of microtubule-based transport through phsophorylation of the microtuble-binding protein eEF1gamma. May function in the control of alternative splicing by phosphorylating serine/arginine-rich splicing factors, the SR proteins, including x16. Negative regulator of the copia retrotransposon element of the white (w) gene. In the eye, it is required for normal pigmentation, photoreceptor cell development and for organization of interommatidial bristles. Also essential for embryonic segmentation and differentiation of the nervous system. Functionally, may be the specific isoform involved in regulation of microtubule-based transport through phosphorylation of the microtubule binding protein eEF1gamma. The polypeptide is Serine/threonine-protein kinase Doa (Drosophila melanogaster (Fruit fly)).